The following is a 210-amino-acid chain: High frequency lysogenization protein HflD homolog (210 aa).

The stretch at 103–130 (EAKAKLAERLQQIERQLPLYENDIMADQ) forms a coiled coil.

This sequence belongs to the HflD family.

It localises to the cytoplasm. It is found in the cell inner membrane. The polypeptide is High frequency lysogenization protein HflD homolog (Actinobacillus pleuropneumoniae serotype 3 (strain JL03)).